Consider the following 518-residue polypeptide: Putative Rieske 2Fe-2S iron-sulfur protein MSMEG_6410/MSMEI_6242 (518 aa).

An Isoglutamyl lysine isopeptide (Lys-Gln) (interchain with Q-Cter in protein Pup) cross-link involves residue K375. The 88-residue stretch at 431–518 folds into the Rieske domain; sequence LYTFFKCLTD…KGHELRCQKL (88 aa). Residues C471, H473, C491, and H494 each coordinate [2Fe-2S] cluster.

Requires [2Fe-2S] cluster as cofactor.

The chain is Putative Rieske 2Fe-2S iron-sulfur protein MSMEG_6410/MSMEI_6242 from Mycolicibacterium smegmatis (strain ATCC 700084 / mc(2)155) (Mycobacterium smegmatis).